The primary structure comprises 343 residues: Holliday junction branch migration complex subunit RuvB (343 aa).

A large ATPase domain (RuvB-L) region spans residues 1–186 (MVMARKSDTL…FQIQERLEYY (186 aa)). ATP contacts are provided by residues Leu-25, Arg-26, Gly-67, Lys-70, Thr-71, Ser-72, 133 to 135 (EDF), Arg-176, Tyr-186, and Arg-223. Thr-71 contributes to the Mg(2+) binding site. Residues 187 to 257 (DAKALESILH…LAQKSLDRLG (71 aa)) form a small ATPAse domain (RuvB-S) region. A head domain (RuvB-H) region spans residues 260 to 343 (ASGLDSMDRK…PPPTPQGSLF (84 aa)). Positions 296, 315, and 320 each coordinate DNA.

The protein belongs to the RuvB family. In terms of assembly, homohexamer. Forms an RuvA(8)-RuvB(12)-Holliday junction (HJ) complex. HJ DNA is sandwiched between 2 RuvA tetramers; dsDNA enters through RuvA and exits via RuvB. An RuvB hexamer assembles on each DNA strand where it exits the tetramer. Each RuvB hexamer is contacted by two RuvA subunits (via domain III) on 2 adjacent RuvB subunits; this complex drives branch migration. In the full resolvosome a probable DNA-RuvA(4)-RuvB(12)-RuvC(2) complex forms which resolves the HJ.

It is found in the cytoplasm. It carries out the reaction ATP + H2O = ADP + phosphate + H(+). Its function is as follows. The RuvA-RuvB-RuvC complex processes Holliday junction (HJ) DNA during genetic recombination and DNA repair, while the RuvA-RuvB complex plays an important role in the rescue of blocked DNA replication forks via replication fork reversal (RFR). RuvA specifically binds to HJ cruciform DNA, conferring on it an open structure. The RuvB hexamer acts as an ATP-dependent pump, pulling dsDNA into and through the RuvAB complex. RuvB forms 2 homohexamers on either side of HJ DNA bound by 1 or 2 RuvA tetramers; 4 subunits per hexamer contact DNA at a time. Coordinated motions by a converter formed by DNA-disengaged RuvB subunits stimulates ATP hydrolysis and nucleotide exchange. Immobilization of the converter enables RuvB to convert the ATP-contained energy into a lever motion, pulling 2 nucleotides of DNA out of the RuvA tetramer per ATP hydrolyzed, thus driving DNA branch migration. The RuvB motors rotate together with the DNA substrate, which together with the progressing nucleotide cycle form the mechanistic basis for DNA recombination by continuous HJ branch migration. Branch migration allows RuvC to scan DNA until it finds its consensus sequence, where it cleaves and resolves cruciform DNA. This Myxococcus xanthus (strain DK1622) protein is Holliday junction branch migration complex subunit RuvB.